We begin with the raw amino-acid sequence, 597 residues long: ATP-dependent lipid A-core flippase (597 aa).

Transmembrane regions (helical) follow at residues 26–46, 65–85, 144–164, 166–186, 250–270, and 276–296; these read WIFA…TGLA, IQII…ANFI, ILTI…MAYL, GLLT…IWWV, AISQ…VIHL, and MLAQ…MLLL. Residues 29-311 form the ABC transmembrane type-1 domain; it reads AASIITMAIY…LTKINGTLQR (283 aa). Positions 343–579 constitute an ABC transporter domain; it reads IRFEHLSFCY…ESHYAGLYRL (237 aa). 377–384 is a binding site for ATP; the sequence is GHSGSGKS.

This sequence belongs to the ABC transporter superfamily. Lipid exporter (TC 3.A.1.106) family. In terms of assembly, homodimer.

Its subcellular location is the cell inner membrane. The enzyme catalyses ATP + H2O + lipid A-core oligosaccharideSide 1 = ADP + phosphate + lipid A-core oligosaccharideSide 2.. Involved in lipopolysaccharide (LPS) biosynthesis. Translocates lipid A-core from the inner to the outer leaflet of the inner membrane. Transmembrane domains (TMD) form a pore in the inner membrane and the ATP-binding domain (NBD) is responsible for energy generation. The protein is ATP-dependent lipid A-core flippase of Nitrosococcus oceani (strain ATCC 19707 / BCRC 17464 / JCM 30415 / NCIMB 11848 / C-107).